The primary structure comprises 535 residues: Probable anion transporter 2, chloroplastic (535 aa).

A chloroplast-targeting transit peptide spans 1 to 95 (MASIRSCVSV…RERAVAAMCS (95 aa)). The next 12 membrane-spanning stretches (helical) occupy residues 125–145 (VVALVAAVMLLCNADRVVMSV), 160–180 (FLGIVQSSFLWGYVFSSMVGG), 191–211 (VMAGAAALWSLATFLTPWAAS), 215–235 (IMLLAIRALFGLAEGVAFPTM), 254–274 (ISMGGFHLGNVISFLATPIIM), 279–299 (LAGTFAFFASLGYLWLSVWLF), 343–363 (IEMWAIIVANVVNNWGYFVLL), 381–401 (AAWFSAIPWAVMALSGYVAGA), 413–433 (VALVRKIMQSIGFIGPGVSLL), 443–463 (VAAVLMTIALSLSSFSQAGYF), 483–503 (GIGTVAAIVSTIGTGYFVQWL), and 504–524 (GSFQAFLTLTAVLYFSATVFY).

The protein belongs to the major facilitator superfamily. Sodium/anion cotransporter (TC 2.A.1.14) family.

It localises to the plastid. It is found in the chloroplast membrane. In terms of biological role, probable anion transporter. The polypeptide is Probable anion transporter 2, chloroplastic (PHT4;2) (Oryza sativa subsp. japonica (Rice)).